The chain runs to 92 residues: Small ribosomal subunit protein uS19 (92 aa).

The tract at residues 72 to 92 (GEFSPTRTYTGHGSDKKSKRG) is disordered.

This sequence belongs to the universal ribosomal protein uS19 family.

In terms of biological role, protein S19 forms a complex with S13 that binds strongly to the 16S ribosomal RNA. This is Small ribosomal subunit protein uS19 from Gluconobacter oxydans (strain 621H) (Gluconobacter suboxydans).